The sequence spans 456 residues: Phosphomethylpyrimidine synthase (456 aa).

Substrate-binding positions include Asn80, Met109, Tyr139, His175, 195-197 (SRG), 236-239 (DSLR), and Glu275. His279 lines the Zn(2+) pocket. Tyr302 is a binding site for substrate. Zn(2+) is bound at residue His343. [4Fe-4S] cluster is bound by residues Cys423, Cys426, and Cys431.

The protein belongs to the ThiC family. The cofactor is [4Fe-4S] cluster.

The enzyme catalyses 5-amino-1-(5-phospho-beta-D-ribosyl)imidazole + S-adenosyl-L-methionine = 4-amino-2-methyl-5-(phosphooxymethyl)pyrimidine + CO + 5'-deoxyadenosine + formate + L-methionine + 3 H(+). It participates in cofactor biosynthesis; thiamine diphosphate biosynthesis. In terms of biological role, catalyzes the synthesis of the hydroxymethylpyrimidine phosphate (HMP-P) moiety of thiamine from aminoimidazole ribotide (AIR) in a radical S-adenosyl-L-methionine (SAM)-dependent reaction. This chain is Phosphomethylpyrimidine synthase, found in Synechococcus elongatus (strain ATCC 33912 / PCC 7942 / FACHB-805) (Anacystis nidulans R2).